The following is a 311-amino-acid chain: Acyl-CoA dehydrogenase IpdE2 (311 aa).

2 residues coordinate FAD: Arg-206 and Gly-273.

Belongs to the acyl-CoA dehydrogenase family. As to quaternary structure, heterotetramer composed of 2 IpdE1 subunits and 2 IpdE2 subunits. FAD serves as cofactor.

The enzyme catalyses 3-[(3aS,4S,5R,7aS)-5-hydroxy-7a-methyl-1-oxo-octahydro-1H-inden-4-yl]propanoyl-CoA + A = (2E)-3-[(3aS,4S,5R,7aS)-5-hydroxy-7a-methyl-1-oxo-octahydro-1H-inden-4-yl]prop-2-enoyl-CoA + AH2. The protein operates within steroid metabolism; cholesterol degradation. Functionally, involved in cholesterol degradation. Catalyzes the dehydrogenation of 5OH-HIP-CoA to 5OH-HIPE-CoA. This Mycolicibacterium smegmatis (strain ATCC 700084 / mc(2)155) (Mycobacterium smegmatis) protein is Acyl-CoA dehydrogenase IpdE2.